The primary structure comprises 1083 residues: Solute carrier family 12 member 7 (1083 aa).

The disordered stretch occupies residues 1-55; it reads MPTNFTVVPVEARADGAGDEAAERTEEPESPESVDQTSPTPGDGNPRENSPFINN. At 1 to 119 the chain is on the cytoplasmic side; it reads MPTNFTVVPV…RREVKAPRMG (119 aa). The segment covering 12–27 has biased composition (basic and acidic residues); sequence ARADGAGDEAAERTEE. Phosphoserine occurs at positions 30 and 33. At Thr37 the chain carries Phosphothreonine. Phosphoserine occurs at positions 50 and 62. The discontinuously helical transmembrane segment at 120–142 threads the bilayer; sequence TFIGVYLPCLQNILGVILFLRLT. K(+)-binding residues include Asn131 and Ile132. Val135 is a chloride binding site. Topologically, residues 143–149 are extracellular; that stretch reads WIVGAAG. Residues 150–172 traverse the membrane as a helical segment; sequence VMESFLIVAMCCTCTMLTAISMS. At 173–196 the chain is on the cytoplasmic side; sequence AIATNGVVPAGGSYYMISRSLGPE. A helical transmembrane segment spans residues 197–225; it reads FGGAVGLCFYLGTTFAGAMYILGTIEIFL. Over 226 to 249 the chain is Extracellular; it reads TYISPSAAIFQAETADGEAAALLN. 2 helical membrane passes run 250–271 and 272–300; these read NMRV…VGVK and YVNK…KTAF. Residues 301–419 lie on the Extracellular side of the membrane; that stretch reads APPDIPVCLL…PYVLTDIMTY (119 aa). Residue Asn312 is glycosylated (N-linked (GlcNAc...) (high mannose) asparagine). 2 N-linked (GlcNAc...) (complex) asparagine glycosylation sites follow: Asn331 and Asn344. Asn360 is a glycosylation site (N-linked (GlcNAc...) (high mannose) asparagine). Residues 420–440 traverse the membrane as a helical segment; that stretch reads FTMLVGIYFPSVTGIMAGSNR. Residues Pro429 and Thr432 each contribute to the K(+) site. Pro429 lines the chloride pocket. Positions 433 and 434 each coordinate chloride. Topologically, residues 441–450 are cytoplasmic; the sequence is SGDLKDAQKS. The chain crosses the membrane as a helical span at residues 451 to 473; sequence IPTGTILAIVTTSFIYLSCIVLF. The Extracellular portion of the chain corresponds to 474 to 504; the sequence is GACIEGVVLRDKFGEALQGNLVIGMLAWPSP. The chain crosses the membrane as a helical span at residues 505–531; the sequence is WVIVIGSFFSTCGAGLQSLTGAPRLLQ. Over 532-554 the chain is Cytoplasmic; the sequence is AIARDGIIPFLQVFGHGKANGEP. A run of 2 helical transmembrane segments spans residues 555–573 and 574–598; these read TWAL…LIAS and LDSV…ACAV. Residue Tyr589 participates in chloride binding. The Cytoplasmic portion of the chain corresponds to 599–612; sequence QTLLRTPNWRPRFK. The next 2 membrane-spanning stretches (helical) occupy residues 613–635 and 636–651; these read FYHW…ICSW and YYAL…IYKY. At 652 to 1083 the chain is on the cytoplasmic side; that stretch reads IEYRGAEKEW…GGREVITIYS (432 aa). The scissor helix stretch occupies residues 664 to 680; it reads GIRGLSLNAARYALLRV. Phosphothreonine is present on residues Thr973 and Thr980.

This sequence belongs to the SLC12A transporter family. K/Cl co-transporter subfamily. Homodimer; adopts a domain-swap conformation at the scissor helices connecting the transmembrane domain and C-terminal domain. Heterodimer with K-Cl cotransporter SLC12A5. Glycosylation at Asn-331 and Asn-344 is required for proper trafficking to the cell surface, and augments protein stability. In terms of tissue distribution, detected in proximal tubules in the kidney, in particular in basolateral membranes of intercalated cells in the cortical collecting duct.

It localises to the cell membrane. The enzyme catalyses K(+)(in) + chloride(in) = K(+)(out) + chloride(out). With respect to regulation, activated by N-ethylmaleimide (NEM). Inhibited by furosemide, DIDS and bumetanide. The inhibition is much stronger in the presence of 50 mM K(+) in the uptake medium. Inhibited by DIOA. Inhibited by WNK3. Mediates electroneutral potassium-chloride cotransport when activated by cell swelling. May mediate K(+) uptake into Deiters' cells in the cochlea and contribute to K(+) recycling in the inner ear. Important for the survival of cochlear outer and inner hair cells and the maintenance of the organ of Corti. May be required for basolateral Cl(-) extrusion in the kidney and contribute to renal acidification. The sequence is that of Solute carrier family 12 member 7 (Slc12a7) from Mus musculus (Mouse).